The following is a 101-amino-acid chain: Citrate lyase acyl carrier protein (101 aa).

The residue at position 14 (S14) is an O-(phosphoribosyl dephospho-coenzyme A)serine.

It belongs to the CitD family. As to quaternary structure, oligomer with a subunit composition of (alpha,beta,gamma)6.

It localises to the cytoplasm. Functionally, covalent carrier of the coenzyme of citrate lyase. The polypeptide is Citrate lyase acyl carrier protein (Latilactobacillus sakei subsp. sakei (strain 23K) (Lactobacillus sakei subsp. sakei)).